The primary structure comprises 876 residues: Leucine--tRNA ligase (876 aa).

The 'HIGH' region signature appears at 42–52; that stretch reads PYPSGKLHMGH. Positions 634–638 match the 'KMSKS' region motif; the sequence is KMSKS. Lys-637 is a binding site for ATP.

It belongs to the class-I aminoacyl-tRNA synthetase family.

It is found in the cytoplasm. It catalyses the reaction tRNA(Leu) + L-leucine + ATP = L-leucyl-tRNA(Leu) + AMP + diphosphate. The polypeptide is Leucine--tRNA ligase (Neisseria gonorrhoeae (strain ATCC 700825 / FA 1090)).